The sequence spans 197 residues: Probable nicotinate-nucleotide adenylyltransferase (197 aa).

The protein belongs to the NadD family.

The enzyme catalyses nicotinate beta-D-ribonucleotide + ATP + H(+) = deamido-NAD(+) + diphosphate. It participates in cofactor biosynthesis; NAD(+) biosynthesis; deamido-NAD(+) from nicotinate D-ribonucleotide: step 1/1. Its function is as follows. Catalyzes the reversible adenylation of nicotinate mononucleotide (NaMN) to nicotinic acid adenine dinucleotide (NaAD). The chain is Probable nicotinate-nucleotide adenylyltransferase from Neisseria meningitidis serogroup C (strain 053442).